We begin with the raw amino-acid sequence, 151 residues long: Sec-independent protein translocase protein TatB (151 aa).

Residues Met-1–Gly-21 form a helical membrane-spanning segment. The tract at residues Met-66–Thr-151 is disordered. A compositionally biased stretch (basic and acidic residues) spans Ala-93–Ser-103. 2 stretches are compositionally biased toward low complexity: residues Ala-109–Asp-122 and Ala-133–Thr-151.

This sequence belongs to the TatB family. In terms of assembly, the Tat system comprises two distinct complexes: a TatABC complex, containing multiple copies of TatA, TatB and TatC subunits, and a separate TatA complex, containing only TatA subunits. Substrates initially bind to the TatABC complex, which probably triggers association of the separate TatA complex to form the active translocon.

The protein resides in the cell inner membrane. In terms of biological role, part of the twin-arginine translocation (Tat) system that transports large folded proteins containing a characteristic twin-arginine motif in their signal peptide across membranes. Together with TatC, TatB is part of a receptor directly interacting with Tat signal peptides. TatB may form an oligomeric binding site that transiently accommodates folded Tat precursor proteins before their translocation. The polypeptide is Sec-independent protein translocase protein TatB (Bordetella parapertussis (strain 12822 / ATCC BAA-587 / NCTC 13253)).